A 268-amino-acid polypeptide reads, in one-letter code: Large ribosomal subunit protein uL4 (268 aa).

The protein belongs to the universal ribosomal protein uL4 family. Part of the 50S ribosomal subunit.

One of the primary rRNA binding proteins, this protein initially binds near the 5'-end of the 23S rRNA. It is important during the early stages of 50S assembly. It makes multiple contacts with different domains of the 23S rRNA in the assembled 50S subunit and ribosome. Its function is as follows. Forms part of the polypeptide exit tunnel. The sequence is that of Large ribosomal subunit protein uL4 from Nanoarchaeum equitans (strain Kin4-M).